Consider the following 173-residue polypeptide: MGTFDLWTDYLGLAHLVRALSGKEGPETRLSPQPEPEPMLEPDQKRSLESSPAPERLCSFCKHNGESRAIYQSHVLKDEAGRVLCPILRDYVCPQCGATRERAHTRRFCPLTGQGYTSVYSHTTRNSAGKKLVRPDKAKTQDTGHRRGGGGGAGFRGAGKSEPSPSCSPSMST.

The segment at 23–51 (KEGPETRLSPQPEPEPMLEPDQKRSLESS) is disordered. The segment at 57–111 (LCSFCKHNGESRAIYQSHVLKDEAGRVLCPILRDYVCPQCGATRERAHTRRFCPL) adopts a Nanos-type zinc-finger fold. Cys58, Cys61, His74, Cys85, Cys93, Cys96, His104, and Cys109 together coordinate Zn(2+). Short sequence motifs (C2HC) lie at residues 58–85 (CSFC…RVLC) and 93–109 (CPQC…RRFC). Residues 123–173 (TTRNSAGKKLVRPDKAKTQDTGHRRGGGGGAGFRGAGKSEPSPSCSPSMST) form a disordered region. Residues 133–145 (VRPDKAKTQDTGH) show a composition bias toward basic and acidic residues. Positions 161-173 (SEPSPSCSPSMST) are enriched in low complexity.

The protein belongs to the nanos family. Binds mRNA from germ cells. Interacts with PUM2. As to expression, ovary, testis and brain (at protein level). In the ovaries, expressed during multiple stages of oogenesis, including primordial, primary, secondary and antral follicles with the highest expression in the oocytes. In the testis, expressed in germ cells, type A spermatogonia (SA), primary spermatocytes (S1), round spermatids (S3) and elongated spermatids.

It localises to the nucleus. The protein resides in the cytoplasm. Its subcellular location is the stress granule. The protein localises to the P-body. Plays a role in the maintenance of the undifferentiated state of germ cells regulating the spermatogonia cell cycle and inducing a prolonged transit in G1 phase. Affects cell proliferation probably by repressing translation of specific mRNAs. Maintains the germ cell lineage by suppressing both Bax-dependent and -independent apoptotic pathways. Essential in the early stage embryo to protect the migrating primordial germ cells (PGCs) from apoptosis. This is Nanos homolog 3 (NANOS3) from Homo sapiens (Human).